The chain runs to 448 residues: Receptor homology region, transmembrane domain- and RING domain-containing protein 2 (448 aa).

The signal sequence occupies residues methionine 1–serine 20. Residues lysine 21 to serine 163 lie on the Lumenal side of the membrane. 2 N-linked (GlcNAc...) asparagine glycosylation sites follow: asparagine 28 and asparagine 74. Residues aspartate 60–alanine 144 enclose the PA domain. Cysteines 62 and 87 form a disulfide. The helical transmembrane segment at isoleucine 164–phenylalanine 184 threads the bilayer. The Cytoplasmic portion of the chain corresponds to valine 185 to cysteine 448. The RING-type; atypical zinc-finger motif lies at cysteine 232–lysine 274. A compositionally biased stretch (low complexity) spans glutamine 344 to serine 378. 2 disordered regions span residues glutamine 344–isoleucine 380 and methionine 402–leucine 424. Residues serine 408–proline 423 show a composition bias toward polar residues.

It is found in the protein storage vacuole membrane. The protein localises to the golgi apparatus membrane. In terms of biological role, involved in the trafficking of vacuolar proteins. May function as a sorting receptor for protein trafficking to the protein storage vacuole (PSV). The polypeptide is Receptor homology region, transmembrane domain- and RING domain-containing protein 2 (RMR2) (Arabidopsis thaliana (Mouse-ear cress)).